A 320-amino-acid chain; its full sequence is Polyadenylate-binding protein-interacting protein 13 (320 aa).

The segment at 1-44 is disordered; sequence MAVAENVGVKVDSSNNQNIDNNTTSLVETKPSCSDDQTPKSKSS. The span at 12–44 shows a compositional bias: polar residues; it reads DSSNNQNIDNNTTSLVETKPSCSDDQTPKSKSS. The short motif at 65–75 is the PAM2-like element; the sequence is HLNPMAKEFVP. 2 consecutive RRM domains span residues 137-212 and 234-310; these read RTVY…MSKT and KTVY…PSKT.

The polypeptide is Polyadenylate-binding protein-interacting protein 13 (CID13) (Arabidopsis thaliana (Mouse-ear cress)).